The primary structure comprises 1450 residues: Helicase SWR1 (1450 aa).

An HSA domain is found at 344–417 (IQYMYKEQNL…EKQRKAIARN (74 aa)). The disordered stretch occupies residues 469–618 (KQHPNEDDIE…TNDPLAVQDV (150 aa)). Low complexity predominate over residues 480 to 497 (STSDDFSSTGDSDNLSSS). Residues 498-510 (SDEESDDEINDLS) show a composition bias toward acidic residues. Composition is skewed to low complexity over residues 523-540 (SSTS…SKNP) and 549-560 (TNDFENESNSSD). The segment covering 578–588 (ENLTDDSEDSN) has biased composition (acidic residues). A compositionally biased stretch (basic and acidic residues) spans 589–602 (DGEHDTTSDNEKSD). Residues 640–805 (ASLYNNNTNG…WSLLYFLMPQ (166 aa)) enclose the Helicase ATP-binding domain. ATP is bound at residue 653 to 700 (DEMGLGKTIQTISLLSYLACEKHNWGPHLIVVPTSVLLNWEMEFKRFA). Positions 756 to 759 (DEAH) match the DEAH box motif. A Helicase C-terminal domain is found at 1179 to 1332 (KLQKLAILLQ…DVIIQKGEFT (154 aa)). The disordered stretch occupies residues 1400–1424 (VDDEDFDESSTNKTGGNILNGDDID).

It belongs to the SNF2/RAD54 helicase family. SWR1 subfamily. In terms of assembly, component of the SWR1 chromatin-remodeling complex.

The protein resides in the nucleus. It catalyses the reaction ATP + H2O = ADP + phosphate + H(+). Functionally, catalytic component of the SWR1 complex which mediates the ATP-dependent exchange of histone H2A for the H2A variant HZT1 leading to transcriptional regulation of selected genes by chromatin remodeling. This is Helicase SWR1 (SWR1) from Candida glabrata (strain ATCC 2001 / BCRC 20586 / JCM 3761 / NBRC 0622 / NRRL Y-65 / CBS 138) (Yeast).